The primary structure comprises 511 residues: Sterol 14-alpha demethylase resB (511 aa).

The helical transmembrane segment at 3 to 23 (ILWIVAYALLAFAASIALNLV) threads the bilayer. Cys-451 serves as a coordination point for heme.

Belongs to the cytochrome P450 family. Heme is required as a cofactor.

The protein resides in the membrane. It carries out the reaction a 14alpha-methyl steroid + 3 reduced [NADPH--hemoprotein reductase] + 3 O2 = a Delta(14) steroid + formate + 3 oxidized [NADPH--hemoprotein reductase] + 4 H2O + 4 H(+). The enzyme catalyses a 14alpha-methyl steroid + reduced [NADPH--hemoprotein reductase] + O2 = a 14alpha-hydroxymethyl steroid + oxidized [NADPH--hemoprotein reductase] + H2O + H(+). It catalyses the reaction a 14alpha-hydroxymethyl steroid + reduced [NADPH--hemoprotein reductase] + O2 = a 14alpha-formyl steroid + oxidized [NADPH--hemoprotein reductase] + 2 H2O + H(+). The catalysed reaction is a 14alpha-formyl steroid + reduced [NADPH--hemoprotein reductase] + O2 = a Delta(14) steroid + formate + oxidized [NADPH--hemoprotein reductase] + H2O + 2 H(+). It carries out the reaction lanosterol + 3 reduced [NADPH--hemoprotein reductase] + 3 O2 = 4,4-dimethyl-5alpha-cholesta-8,14,24-trien-3beta-ol + formate + 3 oxidized [NADPH--hemoprotein reductase] + 4 H2O + 4 H(+). The enzyme catalyses lanosterol + reduced [NADPH--hemoprotein reductase] + O2 = 32-hydroxylanosterol + oxidized [NADPH--hemoprotein reductase] + H2O + H(+). It catalyses the reaction 32-hydroxylanosterol + reduced [NADPH--hemoprotein reductase] + O2 = 32-oxolanosterol + oxidized [NADPH--hemoprotein reductase] + 2 H2O + H(+). The catalysed reaction is 32-oxolanosterol + reduced [NADPH--hemoprotein reductase] + O2 = 4,4-dimethyl-5alpha-cholesta-8,14,24-trien-3beta-ol + formate + oxidized [NADPH--hemoprotein reductase] + H2O + 2 H(+). It carries out the reaction eburicol + 3 reduced [NADPH--hemoprotein reductase] + 3 O2 = 14-demethyleburicol + formate + 3 oxidized [NADPH--hemoprotein reductase] + 4 H2O + 4 H(+). The enzyme catalyses eburicol + reduced [NADPH--hemoprotein reductase] + O2 = 32-hydroxyeburicol + oxidized [NADPH--hemoprotein reductase] + H2O + H(+). It catalyses the reaction 32-hydroxyeburicol + reduced [NADPH--hemoprotein reductase] + O2 = 32-oxoeburicol + oxidized [NADPH--hemoprotein reductase] + 2 H2O + H(+). The catalysed reaction is 32-oxoeburicol + reduced [NADPH--hemoprotein reductase] + O2 = 14-demethyleburicol + formate + oxidized [NADPH--hemoprotein reductase] + H2O + 2 H(+). Its function is as follows. Sterol 14-alpha demethylase; part of the gene cluster that mediates the biosynthesis of the tetrahydropyranyl antifungal agent restricticin that acts as an inhibitor of CYP51 and blocks the ergosterol biosynthesis. Sterol 14-alpha-demethylase plays a critical role in the biosynthesis of ergosterol, the major sterol component in fungal membranes that participates in a variety of functions. ResB acts as a self-resistant CYP51 that contains mutations found in CYP51s isolated from azole resistance strains and that is not inhibited by the final product of the cluster, restricticin. The polypeptide is Sterol 14-alpha demethylase resB (Aspergillus sclerotiorum).